The following is a 521-amino-acid chain: Anthranilate synthase component 1 (521 aa).

L-tryptophan contacts are provided by residues T40 and 292 to 294 (PYM). Position 329–330 (329–330 (GT)) interacts with chorismate. A Mg(2+)-binding site is contributed by E362. Residues Y450, R470, 484–486 (GAG), and G486 contribute to the chorismate site. E499 is a Mg(2+) binding site.

The protein belongs to the anthranilate synthase component I family. In terms of assembly, heterotetramer consisting of two non-identical subunits: a beta subunit (TrpG) and a large alpha subunit (TrpE). Mg(2+) serves as cofactor.

The catalysed reaction is chorismate + L-glutamine = anthranilate + pyruvate + L-glutamate + H(+). The protein operates within amino-acid biosynthesis; L-tryptophan biosynthesis; L-tryptophan from chorismate: step 1/5. With respect to regulation, feedback inhibited by tryptophan. Functionally, part of a heterotetrameric complex that catalyzes the two-step biosynthesis of anthranilate, an intermediate in the biosynthesis of L-tryptophan. In the first step, the glutamine-binding beta subunit (TrpG) of anthranilate synthase (AS) provides the glutamine amidotransferase activity which generates ammonia as a substrate that, along with chorismate, is used in the second step, catalyzed by the large alpha subunit of AS (TrpE) to produce anthranilate. In the absence of TrpG, TrpE can synthesize anthranilate directly from chorismate and high concentrations of ammonia. The sequence is that of Anthranilate synthase component 1 (trpE) from Buchnera aphidicola subsp. Acyrthosiphon pisum (strain APS) (Acyrthosiphon pisum symbiotic bacterium).